The following is a 913-amino-acid chain: Vacuolar membrane protease (913 aa).

Topologically, residues Met-1–Thr-15 are cytoplasmic. Residues Thr-16–Ala-36 form a helical membrane-spanning segment. The Vacuolar segment spans residues Asn-37–Tyr-364. Asn-117 carries an N-linked (GlcNAc...) asparagine glycan. 2 residues coordinate Zn(2+): His-152 and Asp-164. Glu-196 serves as the catalytic Proton acceptor. Zn(2+) is bound by residues Glu-197, Glu-222, and His-296. Residues Val-365–Cys-385 traverse the membrane as a helical segment. The Cytoplasmic portion of the chain corresponds to Asn-386–Pro-394. Residues Thr-395 to Phe-415 traverse the membrane as a helical segment. At Thr-416–Asn-431 the chain is on the vacuolar side. The chain crosses the membrane as a helical span at residues Phe-432–Ala-452. Topologically, residues Leu-453–Thr-465 are cytoplasmic. The helical transmembrane segment at Leu-466–Leu-486 threads the bilayer. Residues Ser-487–Thr-494 lie on the Vacuolar side of the membrane. Residues Gly-495–Cys-515 traverse the membrane as a helical segment. Residues Ser-516 to Tyr-600 are Cytoplasmic-facing. The span at Asn-540–Glu-552 shows a compositional bias: basic and acidic residues. Positions Asn-540 to Ser-578 are disordered. A compositionally biased stretch (polar residues) spans Thr-557 to Pro-566. The segment covering Ser-567 to Ser-578 has biased composition (low complexity). Residues Leu-601–Ala-621 form a helical membrane-spanning segment. The Vacuolar segment spans residues Leu-622–Glu-634. A helical transmembrane segment spans residues Ala-635 to Thr-655. Residues Thr-656 to Arg-660 lie on the Cytoplasmic side of the membrane. The chain crosses the membrane as a helical span at residues Phe-661–Ala-681. Residues Pro-682–Leu-913 lie on the Vacuolar side of the membrane. Residues Asn-729, Asn-794, and Asn-810 are each glycosylated (N-linked (GlcNAc...) asparagine).

This sequence belongs to the peptidase M28 family. The cofactor is Zn(2+).

The protein resides in the vacuole membrane. Its function is as follows. May be involved in vacuolar sorting and osmoregulation. The sequence is that of Vacuolar membrane protease from Kluyveromyces lactis (strain ATCC 8585 / CBS 2359 / DSM 70799 / NBRC 1267 / NRRL Y-1140 / WM37) (Yeast).